A 459-amino-acid polypeptide reads, in one-letter code: E3 ubiquitin-protein ligase RNF25 (459 aa).

The RWD domain occupies 18 to 128 (SEVEVLESIY…EKGKEILTDN (111 aa)). Zn(2+) is bound by residues cysteine 135, cysteine 138, cysteine 153, histidine 155, histidine 158, cysteine 161, cysteine 198, and cysteine 201. An RING-type zinc finger spans residues 135–202 (CVICLYGFQE…AVGVQCPVCR (68 aa)). 2 disordered regions span residues 268-309 (PPAP…PPLP) and 322-459 (TRSN…KDGS). Polar residues predominate over residues 282–303 (KGSQPPSTLAAELSTSPAVQST). Basic and acidic residues-rich tracts occupy residues 349–370 (QPERRHPKGGECHAPKGTRDTQ), 378–389 (PLKEPMDLKPEP), 413–424 (RTRDCVRWERSK), and 446–459 (TRRESLGLESKDGS). Serine 450 carries the phosphoserine modification.

Belongs to the RNF25 family. As to quaternary structure, interacts with UBE2D2, and may also interact with UBE2E1 and UBE2E3. Interacts with RELA/p65. Post-translationally, ubiquitinated; autoubiquitinated.

It is found in the cytoplasm. It carries out the reaction S-ubiquitinyl-[E2 ubiquitin-conjugating enzyme]-L-cysteine + [acceptor protein]-L-lysine = [E2 ubiquitin-conjugating enzyme]-L-cysteine + N(6)-ubiquitinyl-[acceptor protein]-L-lysine.. It functions in the pathway protein modification; protein ubiquitination. E3 ubiquitin-protein ligase that plays a key role in the RNF14-RNF25 translation quality control pathway, a pathway that takes place when a ribosome has stalled during translation, and which promotes ubiquitination and degradation of translation factors on stalled ribosomes. Catalyzes ubiquitination of RPS27A in response to ribosome collisions, promoting activation of RNF14. RNF25 catalyzes ubiquitination of other ribosomal proteins on stalled ribosomes, such as RPL0, RPL1, RPL12, RPS13 and RPS17. Also involved in ubiquitination and degradation of stalled ETF1/eRF1. Independently of its function in the response to stalled ribosomes, mediates ubiquitination and subsequent proteasomal degradation of NKD2. May also stimulate transcription mediated by NF-kappa-B via its interaction with RELA/p65. In Homo sapiens (Human), this protein is E3 ubiquitin-protein ligase RNF25.